The primary structure comprises 635 residues: Glutamyl-tRNA(Gln) amidotransferase subunit E (635 aa).

The tract at residues leucine 415–aspartate 437 is disordered.

This sequence belongs to the GatB/GatE family. GatE subfamily. Heterodimer of GatD and GatE.

The catalysed reaction is L-glutamyl-tRNA(Gln) + L-glutamine + ATP + H2O = L-glutaminyl-tRNA(Gln) + L-glutamate + ADP + phosphate + H(+). In terms of biological role, allows the formation of correctly charged Gln-tRNA(Gln) through the transamidation of misacylated Glu-tRNA(Gln) in organisms which lack glutaminyl-tRNA synthetase. The reaction takes place in the presence of glutamine and ATP through an activated gamma-phospho-Glu-tRNA(Gln). The GatDE system is specific for glutamate and does not act on aspartate. The sequence is that of Glutamyl-tRNA(Gln) amidotransferase subunit E from Pyrococcus horikoshii (strain ATCC 700860 / DSM 12428 / JCM 9974 / NBRC 100139 / OT-3).